The sequence spans 235 residues: MNENVMVKGLTALTILTSLGFAENISNQPHSIAKAEKNVKEITDATKEPYNSVVAFVGGTGVVVGKNTIVTNKHIAKSNDIFKNRVSAHHSSKGKGGGNYDVKDIVEYPGKEDLAIVHVHETSTEGLNFNKNVSYTKFADGAKVKDRISVIGYPKGAQTKYKMFESTGTINHISGTFMEFDAYAQPGNSGSPVLNSKHELIGILYAGSGKDESEKNFGVYFTPQLKEFIQNNIEK.

A signal peptide spans 1 to 35 (MNENVMVKGLTALTILTSLGFAENISNQPHSIAKA). Active-site charge relay system residues include H74, D113, and S189.

This sequence belongs to the peptidase S1B family.

It localises to the secreted. The chain is Serine protease SplA (splA) from Staphylococcus aureus (strain MSSA476).